The following is a 390-amino-acid chain: Chorismate synthase (390 aa).

Arginine 39 and arginine 45 together coordinate NADP(+). FMN contacts are provided by residues 132 to 134, 253 to 254, glycine 298, 313 to 317, and arginine 339; these read RSS, NA, and KPIPT.

Belongs to the chorismate synthase family. In terms of assembly, homotetramer. FMNH2 serves as cofactor.

The enzyme catalyses 5-O-(1-carboxyvinyl)-3-phosphoshikimate = chorismate + phosphate. Its pathway is metabolic intermediate biosynthesis; chorismate biosynthesis; chorismate from D-erythrose 4-phosphate and phosphoenolpyruvate: step 7/7. In terms of biological role, catalyzes the anti-1,4-elimination of the C-3 phosphate and the C-6 proR hydrogen from 5-enolpyruvylshikimate-3-phosphate (EPSP) to yield chorismate, which is the branch point compound that serves as the starting substrate for the three terminal pathways of aromatic amino acid biosynthesis. This reaction introduces a second double bond into the aromatic ring system. The sequence is that of Chorismate synthase from Bacillus pumilus (strain SAFR-032).